Consider the following 401-residue polypeptide: LL-diaminopimelate aminotransferase (401 aa).

Substrate contacts are provided by Tyr15 and Gly42. Pyridoxal 5'-phosphate contacts are provided by residues Tyr72, 108-109, Tyr132, Asn176, Tyr207, and 235-237; these read AK and SFS. The substrate site is built by Lys109, Tyr132, and Asn176. Lys238 bears the N6-(pyridoxal phosphate)lysine mark. 2 residues coordinate pyridoxal 5'-phosphate: Arg246 and Asn281. Residues Asn281 and Arg377 each coordinate substrate.

It belongs to the class-I pyridoxal-phosphate-dependent aminotransferase family. LL-diaminopimelate aminotransferase subfamily. As to quaternary structure, homodimer. Pyridoxal 5'-phosphate serves as cofactor.

It carries out the reaction (2S,6S)-2,6-diaminopimelate + 2-oxoglutarate = (S)-2,3,4,5-tetrahydrodipicolinate + L-glutamate + H2O + H(+). It functions in the pathway amino-acid biosynthesis; L-lysine biosynthesis via DAP pathway; LL-2,6-diaminopimelate from (S)-tetrahydrodipicolinate (aminotransferase route): step 1/1. Functionally, involved in the synthesis of meso-diaminopimelate (m-DAP or DL-DAP), required for both lysine and peptidoglycan biosynthesis. Catalyzes the direct conversion of tetrahydrodipicolinate to LL-diaminopimelate. This is LL-diaminopimelate aminotransferase from Azobacteroides pseudotrichonymphae genomovar. CFP2.